The primary structure comprises 429 residues: Glutamate-1-semialdehyde 2,1-aminomutase 2 (429 aa).

K268 carries the post-translational modification N6-(pyridoxal phosphate)lysine.

Belongs to the class-III pyridoxal-phosphate-dependent aminotransferase family. HemL subfamily. In terms of assembly, homodimer. The cofactor is pyridoxal 5'-phosphate.

The protein resides in the cytoplasm. The enzyme catalyses (S)-4-amino-5-oxopentanoate = 5-aminolevulinate. It participates in porphyrin-containing compound metabolism; protoporphyrin-IX biosynthesis; 5-aminolevulinate from L-glutamyl-tRNA(Glu): step 2/2. The protein is Glutamate-1-semialdehyde 2,1-aminomutase 2 of Geobacillus kaustophilus (strain HTA426).